Reading from the N-terminus, the 335-residue chain is Glucokinase (335 aa).

11 to 16 serves as a coordination point for ATP; it reads ADIGGT.

It belongs to the bacterial glucokinase family.

It localises to the cytoplasm. The enzyme catalyses D-glucose + ATP = D-glucose 6-phosphate + ADP + H(+). The protein is Glucokinase of Stenotrophomonas maltophilia (strain R551-3).